A 666-amino-acid chain; its full sequence is 1-deoxy-D-xylulose-5-phosphate synthase (666 aa).

Thiamine diphosphate contacts are provided by residues His-103 and 144 to 146 (AHS). Asp-175 provides a ligand contact to Mg(2+). Residues 176–177 (GA), Asn-204, Tyr-314, and Glu-396 each bind thiamine diphosphate. Asn-204 is a binding site for Mg(2+).

It belongs to the transketolase family. DXPS subfamily. Homodimer. The cofactor is Mg(2+). Requires thiamine diphosphate as cofactor.

The catalysed reaction is D-glyceraldehyde 3-phosphate + pyruvate + H(+) = 1-deoxy-D-xylulose 5-phosphate + CO2. Its pathway is metabolic intermediate biosynthesis; 1-deoxy-D-xylulose 5-phosphate biosynthesis; 1-deoxy-D-xylulose 5-phosphate from D-glyceraldehyde 3-phosphate and pyruvate: step 1/1. Catalyzes the acyloin condensation reaction between C atoms 2 and 3 of pyruvate and glyceraldehyde 3-phosphate to yield 1-deoxy-D-xylulose-5-phosphate (DXP). In Nitrobacter winogradskyi (strain ATCC 25391 / DSM 10237 / CIP 104748 / NCIMB 11846 / Nb-255), this protein is 1-deoxy-D-xylulose-5-phosphate synthase.